Reading from the N-terminus, the 137-residue chain is MSFSGVKVSPECLEAFQELKLGKSLRYVVFKMNDTKTEIVVEKKSTDKDFDTFLGDLPEKDCRYAIYDFEFNLGEGVRNKIIFISWSPDVAPIKSKMVYSSSKDTLRRAFTGIGTDIQATDFSEVAYETVLEKVTRK.

The 131-residue stretch at 5–135 (GVKVSPECLE…AYETVLEKVT (131 aa)) folds into the ADF-H domain.

The protein belongs to the actin-binding proteins ADF family.

The protein resides in the cytoplasm. The protein localises to the cytoskeleton. It is found in the nucleus matrix. Controls reversibly actin polymerization and depolymerization in a pH-sensitive manner. It has the ability to bind G- and F-actin in a 1:1 ratio of cofilin to actin. Binding to F-actin is regulated by tropomyosin. It is the major component of intranuclear and cytoplasmic actin rods. Required for accumulation of actin at the cell division site via depolymerizing actin at the cell ends. In association with myosin II has a role in the assembly of the contractile ring via severing actin filaments. Involved in the maintenance of the contractile ring once formed. In association with profilin and capping protein, has a role in the mitotic reorganization of the actin cytoskeleton. Severs actin filaments (F-actin). This chain is Cofilin (cof1), found in Schizosaccharomyces pombe (strain 972 / ATCC 24843) (Fission yeast).